The chain runs to 211 residues: MVAHNQVAADNAVSTAAEPRRRPEPSSSSSSSPAAPARPRPCPAVPAPAPGDTHFRTFRSHADYRRITRASALLDACGFYWGPLSVHGAHERLRAEPVGTFLVRDSRQRNCFFALSVKMASGPTSIRVHFQAGRFHLDGSRESFDCLFELLEHYVAAPRRMLGAPLRQRRVRPLQELCRQRIVATVGRENLARIPLNPVLRDYLSSFPFQI.

The disordered stretch occupies residues 1–53 (MVAHNQVAADNAVSTAAEPRRRPEPSSSSSSSPAAPARPRPCPAVPAPAPGDT). Residues 25-35 (PSSSSSSSPAA) show a composition bias toward low complexity. Pro residues predominate over residues 36 to 49 (PARPRPCPAVPAPA). Positions 55–66 (FRTFRSHADYRR) are kinase inhibitory region (KIR). The interval 67–78 (ITRASALLDACG) is extended SH2 subdomain (ESS). Positions 79–174 (FYWGPLSVHG…PLRQRRVRPL (96 aa)) constitute an SH2 domain. Positions 161–210 (MLGAPLRQRRVRPLQELCRQRIVATVGRENLARIPLNPVLRDYLSSFPFQ) constitute an SOCS box domain. The segment at 173–182 (PLQELCRQRI) is interaction with Elongin BC complex.

Belongs to the SOCS1 family. In terms of assembly, interacts with multiple activated signaling proteins of the tyrosine kinase signaling pathway including JAK family kinases, TEC, KIT, GRB2 and VAV. Binding to JAKs is mediated through the KIR and SH2 domains to a phosphorylated tyrosine residue within the JAK JH1 domain. Binds the SH3 domain of GRB2 via diproline determinants in the N-terminus, and the N-terminal regulatory domain of VAV. Interacts with the Elongin BC complex (ELOB and ELOC). Component of an ECS CBC(SOCS1) E3 ubiquitin-protein ligase complex which contains Elongin BC, CUL5, RBX1 and SOCS1. Interacts (via SH2 domain and SOCS box) with TRIM8. Interacts with AXL, CUL2 and FGFR3. Interacts with INSR. Interacts with TRIM8. Interacts with DCUN1D1. Interacts with IFNGR1. Expressed in all tissues with high expression in spleen, small intestine and peripheral blood leukocytes.

It is found in the nucleus. Its subcellular location is the cytoplasmic vesicle. Its pathway is protein modification; protein ubiquitination. Its function is as follows. Essential negative regulator of type I and type II interferon (IFN) signaling, as well as that of other cytokines, including IL2, IL4, IL6 and leukemia inhibitory factor (LIF). Downregulates cytokine signaling by inhibiting the JAK/STAT signaling pathway. Acts by binding to JAK proteins and to IFNGR1 and inhibiting their kinase activity. In vitro, suppresses Tec protein-tyrosine activity. Regulates IFN-gamma (IFNG)-mediated sensory neuron survival. Probable substrate recognition component of an ECS (Elongin BC-CUL2/5-SOCS-box protein) E3 ubiquitin ligase complex which mediates the ubiquitination and subsequent proteasomal degradation of target proteins. The polypeptide is Suppressor of cytokine signaling 1 (SOCS1) (Homo sapiens (Human)).